A 63-amino-acid chain; its full sequence is Sperm protamine P1 (63 aa).

Residues 1–63 form a disordered region; it reads MARYRRHSRS…RYSRRGRRRY (63 aa).

Belongs to the protamine P1 family. Testis.

The protein resides in the nucleus. It localises to the chromosome. Its function is as follows. Protamines substitute for histones in the chromatin of sperm during the haploid phase of spermatogenesis. They compact sperm DNA into a highly condensed, stable and inactive complex. The protein is Sperm protamine P1 (PRM1) of Sminthopsis griseoventer (Gray-bellied dunnart).